The following is a 201-amino-acid chain: Glycerol-3-phosphate acyltransferase (201 aa).

5 consecutive transmembrane segments (helical) span residues Leu-5–Val-25, Lys-55–Ala-75, Phe-87–Gly-107, Leu-118–Val-138, and Thr-164–Val-184.

Belongs to the PlsY family. In terms of assembly, probably interacts with PlsX.

It localises to the cell inner membrane. It catalyses the reaction an acyl phosphate + sn-glycerol 3-phosphate = a 1-acyl-sn-glycero-3-phosphate + phosphate. The protein operates within lipid metabolism; phospholipid metabolism. Catalyzes the transfer of an acyl group from acyl-phosphate (acyl-PO(4)) to glycerol-3-phosphate (G3P) to form lysophosphatidic acid (LPA). This enzyme utilizes acyl-phosphate as fatty acyl donor, but not acyl-CoA or acyl-ACP. This is Glycerol-3-phosphate acyltransferase from Anaeromyxobacter dehalogenans (strain 2CP-1 / ATCC BAA-258).